The sequence spans 106 residues: Small ribosomal subunit protein uS10 (106 aa).

This sequence belongs to the universal ribosomal protein uS10 family. Part of the 30S ribosomal subunit.

Involved in the binding of tRNA to the ribosomes. In Synechococcus sp. (strain CC9311), this protein is Small ribosomal subunit protein uS10.